A 189-amino-acid chain; its full sequence is B3 domain-containing protein At2g32645 (189 aa).

The segment at residues 33 to 133 is a DNA-binding region (TF-B3); it reads FNQVKTPDFL…KLCFALTPKI (101 aa).

The protein localises to the nucleus. The chain is B3 domain-containing protein At2g32645 from Arabidopsis thaliana (Mouse-ear cress).